The sequence spans 525 residues: MSEYLQQIAKRRTFAIISHPDAGKTTITEKMLLFGNAIKTAGTVKAKKSGIYATSDWMEMEKQRGISITTSVMQFPYNGRIINLLDTPGHEDFSEDTYRTLTAVDSALMVVDAVKGVEDRTIKLMNVCRLRDTPIVTFMNKFDRDTRDPLELLDEVENILKIKCAPMNWPIGMGKYFKGVYDLYNDEVTLFETGHGHEIYPYKKIKGLANAKDAIGIDLYEDLEMEIDLVRGASHEFDEQEFLEGNLTPVYFGTALSNFGVKEMMDGFTRYAPAPQHREADQRVVAADEQKLTGFVFKIQANMDEKHRNRIAFFRICSGKYEKGMKIFHERTGKQMQISKALTFMAGEREQVEEGYAGDIIGLHNHGSIQIGDSFTQGEKLKFKGIPNFAPEIFKRVKLNDPLKMKALQKGLVQLSEEGATQVFKPFISNDLVLGAVGVLQFDVVAQRLASEYNVKCSYEGVNVTLARWIFCSDEKKLNDFKKKYEVNLAYDGAGYLTYLAPTGVNLQLAQEKNPDIIFSATREH.

The region spanning 9 to 276 (AKRRTFAIIS…GFTRYAPAPQ (268 aa)) is the tr-type G domain. GTP is bound by residues 18-25 (SHPDAGKT), 86-90 (DTPGH), and 140-143 (NKFD).

It belongs to the TRAFAC class translation factor GTPase superfamily. Classic translation factor GTPase family. PrfC subfamily.

Its subcellular location is the cytoplasm. Its function is as follows. Increases the formation of ribosomal termination complexes and stimulates activities of RF-1 and RF-2. It binds guanine nucleotides and has strong preference for UGA stop codons. It may interact directly with the ribosome. The stimulation of RF-1 and RF-2 is significantly reduced by GTP and GDP, but not by GMP. In Francisella tularensis subsp. mediasiatica (strain FSC147), this protein is Peptide chain release factor 3.